The primary structure comprises 1224 residues: Integrin alpha pat-2 (1224 aa).

An N-terminal signal peptide occupies residues 1–27 (MREGSFPRRTRLLCLLAAVVLISTVTS). Over 28–1153 (FNIDTKNVVL…ASEEGRDLPW (1126 aa)) the chain is Extracellular. FG-GAP repeat units follow at residues 29–96 (NIDT…TCRE), 110–173 (NGSH…KTEE), 180–235 (EPAR…TDRP), 236–292 (NTEY…MMIN), 293–347 (LTDE…KPQY), 364–423 (GKQL…GVRE), and 427–490 (QKIE…PESA). 4 N-linked (GlcNAc...) asparagine glycosylation sites follow: asparagine 74, asparagine 110, asparagine 230, and asparagine 292. Residue asparagine 610 is glycosylated (N-linked (GlcNAc...) asparagine). Residues 622-624 (RGD) carry the Cell attachment site motif. 3 N-linked (GlcNAc...) asparagine glycosylation sites follow: asparagine 681, asparagine 775, and asparagine 819. 2 disordered regions span residues 898–968 (LRIT…QNTG) and 981–1037 (DYEY…KARF). Over residues 920–931 (REEDDESYEDET) the composition is skewed to acidic residues. The span at 955-964 (VYERDEDKIR) shows a compositional bias: basic and acidic residues. A compositionally biased stretch (acidic residues) spans 984-1003 (YIPDDQEYDGDDFEDDDEDF). Residues 1008-1023 (SKRVKRAPVPKKKKKE) are compositionally biased toward basic residues. Residues 1024 to 1037 (GSRSGEPRSDKARF) are compositionally biased toward basic and acidic residues. The helical transmembrane segment at 1154–1174 (WLYLLAILIGLAILILLILLL) threads the bilayer. Over 1175–1224 (WRCGFFKRNRPPTEHAELRAEKQPAAHYADTQSRYAPQDQYSQGRHGQML) the chain is Cytoplasmic. Residues 1190 to 1224 (AELRAEKQPAAHYADTQSRYAPQDQYSQGRHGQML) are disordered. Over residues 1204-1224 (DTQSRYAPQDQYSQGRHGQML) the composition is skewed to polar residues.

It belongs to the integrin alpha chain family. In terms of assembly, heterodimer of an alpha and a beta subunit. Alpha pat-2 associates with beta pat-3.

Its subcellular location is the membrane. Functionally, required for muscle development probably through the regulation of the actin-myosin cytoskeleton. During the formation of neuromuscular junctions at the larval stage, negatively regulates membrane protrusion from body wall muscles, probably through lamins such as epi-1, lam-2 and unc-52. Required for distal tip cell migration and dorsal pathfinding. Required for egg-laying. May play a role in cell motility and cell-cell interactions. The chain is Integrin alpha pat-2 from Caenorhabditis briggsae.